Reading from the N-terminus, the 217-residue chain is Somatotropin (217 aa).

An N-terminal signal peptide occupies residues methionine 1–alanine 26. Histidine 46 is a binding site for Zn(2+). A disulfide bond links cysteine 79 and cysteine 190. Glutamate 199 serves as a coordination point for Zn(2+). Cysteines 207 and 215 form a disulfide.

It belongs to the somatotropin/prolactin family.

The protein resides in the secreted. Functionally, growth hormone plays an important role in growth control. This Struthio camelus (Common ostrich) protein is Somatotropin (GH).